Consider the following 293-residue polypeptide: MSKAQKRKRLNKYDGESKTPANKSTVDGGNPYPTLLRPTAEECRDVRDALLSLHGFPPEFANYRRQRLRSFSAVDDHDTQCNLKSETLNETEEESVLDGLVKILLSQNTTESNSQRAFASLKATFPKWDDVLNAESKSIENAIRCGGLAPKKAVCIKNILNRLQNERGRLCLEYLRGLSVEEVKTELSHFKGVGPKTVSCVLMFNLQHNDFPVDTHVFEIAKALGWVPKTADRNKTYVHLNRKIPDELKFDLNCLLYTHGKICSNCKKNVAKPKAKVASPDDCPLVGFYDLIV.

Basic residues predominate over residues 1–10 (MSKAQKRKRL). Positions 1–34 (MSKAQKRKRLNKYDGESKTPANKSTVDGGNPYPT) are disordered. DNA is bound by residues Asn-108 and Lys-151. Residue Lys-196 is the Schiff-base intermediate with DNA of the active site. Residues His-216 and Asp-232 each coordinate DNA.

This sequence belongs to the DNA glycosylase family.

This Arabidopsis thaliana (Mouse-ear cress) protein is Putative DNA glycosylase At3g47830.